Consider the following 412-residue polypeptide: Trehalose synthase (412 aa).

It belongs to the glycosyltransferase group 1 family. Glycosyltransferase 4 subfamily. In terms of assembly, homodimer. Requires Mg(2+) as cofactor.

The catalysed reaction is an NDP-alpha-D-glucose + D-glucose = alpha,alpha-trehalose + a ribonucleoside 5'-diphosphate + H(+). In terms of biological role, synthesizes trehalose from ADP-glucose and glucose. Has a much lower activity toward UDP-glucose and GDP-glucose. The reaction is reversible, the equilibrium strongly favors trehalose synthesis. The chain is Trehalose synthase from Pyrococcus furiosus (strain ATCC 43587 / DSM 3638 / JCM 8422 / Vc1).